The following is a 119-amino-acid chain: Mitochondrial coiled-coil domain protein 1 (119 aa).

The N-terminal 24 residues, 1–24 (MVLPLPWLSRYHFLRLLLPSWSLA), are a transit peptide targeting the mitochondrion. The interval 25 to 65 (PQGSHGCCSQNPKASMEEQTSSRGNGKMTSPPRGPGTHRTA) is disordered. Over residues 31–52 (CCSQNPKASMEEQTSSRGNGKM) the composition is skewed to polar residues. Residues 62 to 116 (HRTAELARAEELLEQQLELYQALLEGQEGAWEAQALVLKIQKLKEQMRRHQESLG) adopt a coiled-coil conformation.

In terms of tissue distribution, widely expressed. Expressed in adult and fetal liver, kidney and lung. Expressed in fetal brain. Weakly expressed in fetal spleen.

It is found in the mitochondrion. The protein is Mitochondrial coiled-coil domain protein 1 (MCCD1) of Homo sapiens (Human).